The following is a 211-amino-acid chain: Large ribosomal subunit protein uL4 (211 aa).

Positions 41–53 are enriched in polar residues; the sequence is QAHSRQGTASTLT. The segment at 41–78 is disordered; the sequence is QAHSRQGTASTLTRAEVRGGGRKPYKQKGTGRARQGTI. Residues 60-71 are compositionally biased toward basic residues; sequence GGRKPYKQKGTG.

The protein belongs to the universal ribosomal protein uL4 family. As to quaternary structure, part of the 50S ribosomal subunit.

In terms of biological role, one of the primary rRNA binding proteins, this protein initially binds near the 5'-end of the 23S rRNA. It is important during the early stages of 50S assembly. It makes multiple contacts with different domains of the 23S rRNA in the assembled 50S subunit and ribosome. Forms part of the polypeptide exit tunnel. The protein is Large ribosomal subunit protein uL4 of Prochlorococcus marinus (strain MIT 9303).